Reading from the N-terminus, the 920-residue chain is Androgen receptor (920 aa).

Residues 1–559 (MEVQLGLGRV…IDYYFPPQKT (559 aa)) are modulating. The interaction with ZNF318 stretch occupies residues 1–587 (MEVQLGLGRV…GSCKVFFKRA (587 aa)). 2 disordered regions span residues 36 to 167 (NPGP…LSLL) and 195 to 228 (QQQQQEAVSEGSSSGRAREASGAPTSSKDNYLGG). Over residues 44–91 (AASAAPPGASLLLLQQQQQQQQQQQQQQQQQQQQQQQETSPRQQQQQQ) the composition is skewed to low complexity. Residue Ser-83 is modified to Phosphoserine; by CDK9. Ser-96 carries the post-translational modification Phosphoserine. The segment covering 195 to 217 (QQQQQEAVSEGSSSGRAREASGA) has biased composition (low complexity). Polar residues predominate over residues 218 to 228 (PTSSKDNYLGG). The residue at position 225 (Tyr-225) is a Phosphotyrosine; by CSK. Residue Ser-258 is modified to Phosphoserine. Tyr-269 bears the Phosphotyrosine; by CSK and TNK2 mark. Tyr-309, Tyr-348, Tyr-359, and Tyr-364 each carry phosphotyrosine; by CSK. Tyr-365 carries the post-translational modification Phosphotyrosine; by CSK and TNK2. A Glycyl lysine isopeptide (Lys-Gly) (interchain with G-Cter in SUMO) cross-link involves residue Lys-388. A Phosphotyrosine; by CSK modification is found at Tyr-395. Residue Lys-521 forms a Glycyl lysine isopeptide (Lys-Gly) (interchain with G-Cter in SUMO) linkage. Phosphotyrosine; by CSK occurs at positions 535 and 552. Positions 552–919 (YYFPPQKTCL…GKVKPIYFHT (368 aa)) are interaction with LPXN. 2 consecutive NR C4-type zinc fingers follow at residues 560 to 580 (CLICGDEASGCHYGALTCGSC) and 596 to 620 (CASRNDCTIDKFRRKNCPSCRLRKC). The segment at residues 560–632 (CLICGDEASG…AGMTLGARKL (73 aa)) is a DNA-binding region (nuclear receptor). Positions 572–662 (YGALTCGSCK…TEETTQKLTV (91 aa)) are interaction with HIPK3. The tract at residues 592-919 (QKYLCASRND…GKVKPIYFHT (328 aa)) is interaction with CCAR1. Residues 625-919 (MTLGARKLKK…GKVKPIYFHT (295 aa)) form an interaction with KAT7 region. At Ser-651 the chain carries Phosphoserine; by STK4/MST1. The NR LBD domain maps to 669-900 (ECQPIFLNVL…DFPEMMAEII (232 aa)). 17beta-hydroxy-5alpha-androstan-3-one is bound by residues Asn-706 and Arg-753. Glycyl lysine isopeptide (Lys-Gly) (interchain with G-Cter in ubiquitin) cross-links involve residues Lys-846 and Lys-848. Thr-878 is a 17beta-hydroxy-5alpha-androstan-3-one binding site. A Phosphotyrosine; by CSK modification is found at Tyr-916.

It belongs to the nuclear hormone receptor family. NR3 subfamily. In terms of assembly, binds DNA as a homodimer. Part of a ternary complex containing AR, EFCAB6/DJBP and PARK7. Interacts with HIPK3 and NR0B2 in the presence of androgen. The ligand binding domain interacts with KAT7/HBO1 in the presence of dihydrotestosterone. Interacts with EFCAB6/DJBP, PQBP1, RANBP9, RBAK, SPDEF, SRA1, TGFB1I1 and RREB1. Interacts with ZMIZ1/ZIMP10 and ZMIZ2/ZMIP7 which both enhance its transactivation activity. Interacts with SLC30A9 and RAD54L2/ARIP4. Interacts with MACROD1 (via macro domain). Interacts via the ligand-binding domain with LXXLL and FXXLF motifs from NCOA1, NCOA2, NCOA3 and MAGEA11. Interacts (via nuclear receptor DNA binding domain and nuclear receptor ligand binding domain) with NCOA4. The AR N-terminal poly-Gln region binds Ran resulting in enhancement of AR-mediated transactivation. Ran-binding decreases as the poly-Gln length increases. Interacts with HIP1 (via coiled coil domain). Interacts (via ligand-binding domain) with TRIM68. Interacts with TNK2. Interacts with USP26. Interacts with RNF6. Interacts (regulated by RNF6 probably through polyubiquitination) with RNF14; regulates AR transcriptional activity. Interacts with PRMT2 and TRIM24. Interacts with RACK1. Interacts with RANBP10; this interaction enhances dihydrotestosterone-induced AR transcriptional activity. Interacts with PRPF6 in a hormone-independent way; this interaction enhances dihydrotestosterone-induced AR transcriptional activity. Interacts with STK4/MST1. Interacts with ZIPK/DAPK3. Interacts with LPXN. Interacts with MAK. Part of a complex containing AR, MAK and NCOA3. Interacts with CRY1. Interacts with CCAR1 and GATA2. Interacts with ZNF318. Interacts with BUD31. Interacts with ARID4A. Interacts with ARID4B. Interacts (via NR LBD domain) with ZBTB7A; the interaction is direct and androgen-dependent. Interacts with NCOR1. Interacts with NCOR2. Interacts with CRY2 in a ligand-dependent manner. Post-translationally, sumoylated on Lys-388 (major) and Lys-521. Ubiquitinated. Deubiquitinated by USP26. 'Lys-6' and 'Lys-27'-linked polyubiquitination by RNF6 modulates AR transcriptional activity and specificity. In terms of processing, phosphorylated in prostate cancer cells in response to several growth factors including EGF. Phosphorylation is induced by c-Src kinase (CSK). Tyr-535 is one of the major phosphorylation sites and an increase in phosphorylation and Src kinase activity is associated with prostate cancer progression. Phosphorylation by TNK2 enhances the DNA-binding and transcriptional activity and may be responsible for androgen-independent progression of prostate cancer. Phosphorylation at Ser-83 by CDK9 regulates AR promoter selectivity and cell growth. Phosphorylation by PAK6 leads to AR-mediated transcription inhibition. Palmitoylated by ZDHHC7 and ZDHHC21. Palmitoylation is required for plasma membrane targeting and for rapid intracellular signaling via ERK and AKT kinases and cAMP generation. Mainly expressed in heart and skeletal muscle. As to expression, expressed in basal and stromal cells of the prostate (at protein level).

The protein resides in the nucleus. The protein localises to the cytoplasm. Its activity is regulated as follows. AIM-100 (4-amino-5,6-biaryl-furo[2,3-d]pyrimidine) suppresses TNK2-mediated phosphorylation at Tyr-269. Inhibits the binding of the Tyr-269 phosphorylated form to androgen-responsive enhancers (AREs) and its transcriptional activity. Functionally, steroid hormone receptors are ligand-activated transcription factors that regulate eukaryotic gene expression and affect cellular proliferation and differentiation in target tissues. Transcription factor activity is modulated by bound coactivator and corepressor proteins like ZBTB7A that recruits NCOR1 and NCOR2 to the androgen response elements/ARE on target genes, negatively regulating androgen receptor signaling and androgen-induced cell proliferation. Transcription activation is also down-regulated by NR0B2. Activated, but not phosphorylated, by HIPK3 and ZIPK/DAPK3. In terms of biological role, lacks the C-terminal ligand-binding domain and may therefore constitutively activate the transcription of a specific set of genes independently of steroid hormones. This chain is Androgen receptor (AR), found in Homo sapiens (Human).